Reading from the N-terminus, the 260-residue chain is Putative hydro-lyase Dshi_0610 (260 aa).

The protein belongs to the D-glutamate cyclase family.

In Dinoroseobacter shibae (strain DSM 16493 / NCIMB 14021 / DFL 12), this protein is Putative hydro-lyase Dshi_0610.